We begin with the raw amino-acid sequence, 237 residues long: 3-oxoacyl-[acyl-carrier-protein] reductase (237 aa).

Met1 is subject to N-acetylmethionine. NADP(+) is bound by residues 11-14 (SRGI) and 34-35 (RN). Lys40 is modified (N6-acetyllysine). Residues Asp56 and 83 to 85 (AAG) each bind NADP(+). Lys96 is subject to N6-acetyllysine. Ser135 provides a ligand contact to substrate. NADP(+)-binding positions include Tyr148, Lys152, and 181–183 (VHT). Tyr148 functions as the Proton acceptor in the catalytic mechanism. Lys195 carries the N6-acetyllysine modification.

The protein belongs to the short-chain dehydrogenases/reductases (SDR) family. As to quaternary structure, homotetramer (in vitro). Heterotetramer with HSD17B8; contains two molecules each of HSD17B8 and CBR4. Does not form homotetramers when HSD17B8 is coexpressed, only heterotetramers (in vitro). In terms of tissue distribution, detected in liver and kidney (at protein level). Displays the highest expression in neuronal and muscle tissues.

The protein resides in the mitochondrion matrix. The enzyme catalyses a (3R)-hydroxyacyl-[ACP] + NADP(+) = a 3-oxoacyl-[ACP] + NADPH + H(+). It carries out the reaction a quinone + NADPH + H(+) = a quinol + NADP(+). The protein operates within lipid metabolism; fatty acid biosynthesis. Component of the heterotetramer complex KAR (3-ketoacyl-[acyl carrier protein] reductase or 3-ketoacyl-[ACP] reductase) that forms part of the mitochondrial fatty acid synthase (mtFAS). Beta-subunit of the KAR heterotetramer complex, responsible for the 3-ketoacyl-ACP reductase activity of the mtFAS, reduces 3-oxoacyl-[ACP] to (3R)-hydroxyacyl-[ACP] in a NADPH-dependent manner with no chain length preference, thereby participating in mitochondrial fatty acid biosynthesis. The homotetramer has NADPH-dependent quinone reductase activity (in vitro), hence could play a role in protection against cytotoxicity of exogenous quinones. As a heterotetramer, it can also reduce 9,10-phenanthrenequinone, 1,4-benzoquinone and various other o-quinones and p-quinones (in vitro). In Homo sapiens (Human), this protein is 3-oxoacyl-[acyl-carrier-protein] reductase (CBR4).